A 343-amino-acid polypeptide reads, in one-letter code: MSLRGKNVTVHDMTLRDGMHPKRHLMTLDQMVSIATGLDEAGIPLIEVTHGDGLGGSSVNYGFPAHTDEEYLGTVIPKMKNAKISALLLPGIGTVDHLKMARDLGVHTIRVATHCTEADVSEQHITMARKLDMDTVGFLMMSHMNGAEGLVKQAKLMEGYGANCIYVTDSAGHLLPEGVKERLGAVRKALKPETELGFHGHHNLAMGVANSIAAIEVGANRIDAAAAGLGAGAGNTPMEVLIAVCSLMGIETGVDVAKITDVAEDLVVPMMDFPIRIDRDALTLGYAGVYGSFLLFAKRASAKYGVPARDILVELGRRGMVGGQEDMIEDTAITMARERGLKV.

Positions 8 to 260 (VTVHDMTLRD…ETGVDVAKIT (253 aa)) constitute a Pyruvate carboxyltransferase domain. 16-17 (RD) contributes to the substrate binding site. D17 is a binding site for Mn(2+). The active-site Proton acceptor is H20. Substrate is bound by residues S170 and H199. The Mn(2+) site is built by H199 and H201. Y290 contributes to the substrate binding site.

Belongs to the 4-hydroxy-2-oxovalerate aldolase family.

It carries out the reaction (S)-4-hydroxy-2-oxopentanoate = acetaldehyde + pyruvate. This is 4-hydroxy-2-oxovalerate aldolase 1 from Dechloromonas aromatica (strain RCB).